The chain runs to 368 residues: Apolipoprotein A-V (368 aa).

An N-terminal signal peptide occupies residues 1–20; the sequence is MAAVITWALALLAVFASTQA. Ser52 is subject to Phosphoserine. Residues 231-255 are a coiled coil; the sequence is TRKAKDLHTSIQRNLDQLRDELSAF. Residues 305 to 333 form a disordered region; the sequence is EEIQHQLAPPPPSHSAFAPELGHSDSNKA.

The protein belongs to the apolipoprotein A1/A4/E family. In terms of assembly, interacts with GPIHBP1. Interacts with SORL1; this interaction leads to APOA5 internalization and sorting either to lysosomes and degradation, or to the trans-Golgi network. Phosphorylated by FAM20C in the extracellular medium. Liver.

Its subcellular location is the secreted. The protein localises to the early endosome. The protein resides in the late endosome. It is found in the golgi apparatus. It localises to the trans-Golgi network. Its function is as follows. Minor apolipoprotein mainly associated with HDL and to a lesser extent with VLDL. May also be associated with chylomicrons. Important determinant of plasma triglyceride (TG) levels by both being a potent stimulator of apo-CII lipoprotein lipase (LPL) TG hydrolysis and an inhibitor of the hepatic VLDL-TG production rate (without affecting the VLDL-apoB production rate). Activates poorly lecithin:cholesterol acyltransferase (LCAT) and does not enhance efflux of cholesterol from macrophages. Binds heparin. The chain is Apolipoprotein A-V (Apoa5) from Mus musculus (Mouse).